Here is a 445-residue protein sequence, read N- to C-terminus: Tubby-like F-box protein 10 (445 aa).

The region spanning 57–112 (SRWANLPPELLFDVIKRLEESESNWPARKHVVACASVCRSWRAMCQEIVLGPEICG) is the F-box domain. Over residues 382–398 (PQPQGTGAAAAPTSAPA) the composition is skewed to low complexity. Positions 382-401 (PQPQGTGAAAAPTSAPAHPE) are disordered.

The protein belongs to the TUB family. As to quaternary structure, part of a SCF (ASK-cullin-F-box) protein ligase complex. Interacts with SKP1A/ASK1. In terms of tissue distribution, ubiquitous.

The protein resides in the nucleus. Its pathway is protein modification; protein ubiquitination. Component of SCF(ASK-cullin-F-box) E3 ubiquitin ligase complexes, which may mediate the ubiquitination and subsequent proteasomal degradation of target proteins. In Arabidopsis thaliana (Mouse-ear cress), this protein is Tubby-like F-box protein 10.